The primary structure comprises 315 residues: Transaldolase (315 aa).

Lys131 serves as the catalytic Schiff-base intermediate with substrate.

It belongs to the transaldolase family. Type 1 subfamily. As to quaternary structure, homodimer.

It is found in the cytoplasm. It catalyses the reaction D-sedoheptulose 7-phosphate + D-glyceraldehyde 3-phosphate = D-erythrose 4-phosphate + beta-D-fructose 6-phosphate. Its pathway is carbohydrate degradation; pentose phosphate pathway; D-glyceraldehyde 3-phosphate and beta-D-fructose 6-phosphate from D-ribose 5-phosphate and D-xylulose 5-phosphate (non-oxidative stage): step 2/3. In terms of biological role, transaldolase is important for the balance of metabolites in the pentose-phosphate pathway. In Actinobacillus pleuropneumoniae serotype 5b (strain L20), this protein is Transaldolase.